Reading from the N-terminus, the 101-residue chain is Chaperone modulatory protein CbpM (101 aa).

This sequence belongs to the CbpM family.

Its function is as follows. Interacts with CbpA and inhibits both the DnaJ-like co-chaperone activity and the DNA binding activity of CbpA. Together with CbpA, modulates the activity of the DnaK chaperone system. Does not inhibit the co-chaperone activity of DnaJ. In Pseudomonas putida (strain ATCC 47054 / DSM 6125 / CFBP 8728 / NCIMB 11950 / KT2440), this protein is Chaperone modulatory protein CbpM.